Here is a 329-residue protein sequence, read N- to C-terminus: CDP-6-deoxy-L-threo-D-glycero-4-hexulose-3-dehydrase reductase (329 aa).

A 2Fe-2S ferredoxin-type domain is found at 2-93 (SLNVKLHPSG…ELDVNYYPEL (92 aa)). The [2Fe-2S] cluster site is built by C37, C42, C45, and C75. The 100-residue stretch at 98–197 (KKTYPCKLDS…EGPQGTFFVR (100 aa)) folds into the FAD-binding FR-type domain.

In terms of assembly, monomer.

Its pathway is nucleotide-sugar biosynthesis; CDP-ascarylose biosynthesis. It participates in bacterial outer membrane biogenesis; lipopolysaccharide biosynthesis. Participates in the conversion of CDP-6-deoxy-D-glycero-L-threo-4-hexulose to 3,6-dideoxy-D-glycero-D-glycero-4-hexulose together with CDP-6-deoxy-D-glycero-L-threo-4-hexulose-3-dehydrase (E1) in two consecutive steps. The detailed mechanism of E3 is not yet resolved. This chain is CDP-6-deoxy-L-threo-D-glycero-4-hexulose-3-dehydrase reductase (ascD), found in Yersinia pestis.